A 545-amino-acid chain; its full sequence is Esterase-5B (545 aa).

Residues 1 to 19 (MYCEKLILLLGCFWISSSA) form the signal peptide. C84 and C103 are disulfide-bonded. Residue N113 is glycosylated (N-linked (GlcNAc...) asparagine). The active-site Acyl-ester intermediate is the S207. C259 and C271 form a disulfide bridge. N421 carries an N-linked (GlcNAc...) asparagine glycan. The active-site Charge relay system is H467. N-linked (GlcNAc...) asparagine glycosylation is present at N507. C515 and C536 are disulfide-bonded.

Belongs to the type-B carboxylesterase/lipase family. In terms of assembly, homodimer.

The protein resides in the secreted. The catalysed reaction is a carboxylic ester + H2O = an alcohol + a carboxylate + H(+). This chain is Esterase-5B (Est-5B), found in Drosophila miranda (Fruit fly).